Here is a 170-residue protein sequence, read N- to C-terminus: Cytochrome b6-f complex subunit 4 (170 aa).

Helical transmembrane passes span 46 to 66 (LLFM…GLAV), 105 to 125 (LLGI…PFIE), and 141 to 161 (TVFL…TLPL).

This sequence belongs to the cytochrome b family. PetD subfamily. In terms of assembly, the 4 large subunits of the cytochrome b6-f complex are cytochrome b6, subunit IV (17 kDa polypeptide, PetD), cytochrome f and the Rieske protein, while the 4 small subunits are PetG, PetL, PetM and PetN. The complex functions as a dimer.

It is found in the cellular thylakoid membrane. Functionally, component of the cytochrome b6-f complex, which mediates electron transfer between photosystem II (PSII) and photosystem I (PSI), cyclic electron flow around PSI, and state transitions. This chain is Cytochrome b6-f complex subunit 4, found in Synechococcus sp. (strain JA-3-3Ab) (Cyanobacteria bacterium Yellowstone A-Prime).